The chain runs to 324 residues: Adenine deaminase (324 aa).

Zn(2+) is bound by residues His8, His10, and His186. The active-site Proton donor is Glu189. Asp267 is a Zn(2+) binding site. A substrate-binding site is contributed by Asp268.

This sequence belongs to the metallo-dependent hydrolases superfamily. Adenosine and AMP deaminases family. Adenine deaminase type 2 subfamily. It depends on Zn(2+) as a cofactor.

It carries out the reaction adenine + H2O + H(+) = hypoxanthine + NH4(+). Its function is as follows. Catalyzes the hydrolytic deamination of adenine to hypoxanthine. Plays an important role in the purine salvage pathway and in nitrogen catabolism. The chain is Adenine deaminase from Mesorhizobium japonicum (strain LMG 29417 / CECT 9101 / MAFF 303099) (Mesorhizobium loti (strain MAFF 303099)).